The following is a 275-amino-acid chain: Lysosome-associated membrane glycoprotein 5 (275 aa).

Residues 1 to 18 (MEFQLLLLCSVWALGVCA) form the signal peptide. The Extracellular segment spans residues 19–228 (EQEVENLSGL…VTDQREQLEQ (210 aa)). 2 N-linked (GlcNAc...) asparagine glycosylation sites follow: asparagine 24 and asparagine 42. Residues 229–249 (TLPLVLGLILGLIIVITISVY) traverse the membrane as a helical segment. The Cytoplasmic segment spans residues 250–275 (HFHLKLNAAHTQQPTLPRDRSLYKNM).

This sequence belongs to the LAMP family. In terms of processing, glycosylated.

It is found in the cytoplasmic vesicle membrane. The protein localises to the cell membrane. The protein resides in the cell projection. It localises to the dendrite. Its subcellular location is the cytoplasmic vesicle. It is found in the secretory vesicle. The protein localises to the synaptic vesicle membrane. The protein resides in the growth cone membrane. It localises to the early endosome membrane. Its subcellular location is the recycling endosome. It is found in the endoplasmic reticulum-Golgi intermediate compartment membrane. The protein localises to the endosome membrane. Its function is as follows. Plays a role in short-term synaptic plasticity in a subset of GABAergic neurons in the brain. In Danio rerio (Zebrafish), this protein is Lysosome-associated membrane glycoprotein 5 (lamp5).